The primary structure comprises 737 residues: Elongation factor 2 (737 aa).

The tr-type G domain maps to 18-262 (TRVRNIGIIA…AVIKFVPNPR (245 aa)). GTP-binding positions include 27-34 (AHVDHGKT), 93-97 (DTPGH), and 147-150 (NKVD). A Diphthamide modification is found at histidine 604.

It belongs to the TRAFAC class translation factor GTPase superfamily. Classic translation factor GTPase family. EF-G/EF-2 subfamily.

It localises to the cytoplasm. Its function is as follows. Catalyzes the GTP-dependent ribosomal translocation step during translation elongation. During this step, the ribosome changes from the pre-translocational (PRE) to the post-translocational (POST) state as the newly formed A-site-bound peptidyl-tRNA and P-site-bound deacylated tRNA move to the P and E sites, respectively. Catalyzes the coordinated movement of the two tRNA molecules, the mRNA and conformational changes in the ribosome. This Sulfolobus acidocaldarius (strain ATCC 33909 / DSM 639 / JCM 8929 / NBRC 15157 / NCIMB 11770) protein is Elongation factor 2 (fusA).